Here is a 475-residue protein sequence, read N- to C-terminus: MSSNSGDVRLWGGRFADGPAEALAKLSASVHFDWRLAPYDIAGSRAHARVLHAAGLLTEDELTRMIAGLDRLEADVADGSFTGTIADEDVHTALERGLLERLGPDLGGKLRAGRSRNDQVATLFRMYLRDHARTVGSLIADLQDALVGLAEAHPDVAMPGRTHLQHAQPVLFAHHVLAHAQALGRDAERLRQWDARTAVSPYGSGALAGSSLGLDPEAVARDLGFEHGSVGNSIDGTASRDFVAEFAFITAMIGVNVSRIAEEIIIWNTKEFSFVTLHDAFSTGSSIMPQKKNPDIAELARGKSGRLIGNLTGLMATLKALPLAYNRDLQEDKEPVFDSIDQLEVLLPAFTGMMATLTVHRERMEELAPAGFSLATDIAEWLVKQGVPFRVAHEVAGECVKVAEADGKELDELTDEQFAKISEHLTPEVRTVLNVPGALASRDGRGGTAPSAVAVQLAEVKADVAAQHAWADAKK.

This sequence belongs to the lyase 1 family. Argininosuccinate lyase subfamily.

Its subcellular location is the cytoplasm. It catalyses the reaction 2-(N(omega)-L-arginino)succinate = fumarate + L-arginine. It functions in the pathway amino-acid biosynthesis; L-arginine biosynthesis; L-arginine from L-ornithine and carbamoyl phosphate: step 3/3. This is Argininosuccinate lyase from Streptomyces coelicolor (strain ATCC BAA-471 / A3(2) / M145).